Consider the following 292-residue polypeptide: N-acetylneuraminate lyase (292 aa).

Residues serine 47 and threonine 48 each coordinate aceneuramate. Catalysis depends on tyrosine 136, which acts as the Proton donor. The active-site Schiff-base intermediate with substrate is the lysine 164. 5 residues coordinate aceneuramate: threonine 166, glycine 188, aspartate 190, glutamate 191, and serine 207.

The protein belongs to the DapA family. NanA subfamily. As to quaternary structure, homotetramer.

It is found in the cytoplasm. It catalyses the reaction aceneuramate = aldehydo-N-acetyl-D-mannosamine + pyruvate. The protein operates within amino-sugar metabolism; N-acetylneuraminate degradation; D-fructose 6-phosphate from N-acetylneuraminate: step 1/5. Catalyzes the reversible aldol cleavage of N-acetylneuraminic acid (sialic acid; Neu5Ac) to form pyruvate and N-acetylmannosamine (ManNAc) via a Schiff base intermediate. This chain is N-acetylneuraminate lyase, found in Actinobacillus pleuropneumoniae serotype 3 (strain JL03).